A 257-amino-acid polypeptide reads, in one-letter code: Ribosomal RNA small subunit methyltransferase A (257 aa).

N12, L14, G39, E60, D85, and N105 together coordinate S-adenosyl-L-methionine.

The protein belongs to the class I-like SAM-binding methyltransferase superfamily. rRNA adenine N(6)-methyltransferase family. RsmA subfamily.

It is found in the cytoplasm. The catalysed reaction is adenosine(1518)/adenosine(1519) in 16S rRNA + 4 S-adenosyl-L-methionine = N(6)-dimethyladenosine(1518)/N(6)-dimethyladenosine(1519) in 16S rRNA + 4 S-adenosyl-L-homocysteine + 4 H(+). In terms of biological role, specifically dimethylates two adjacent adenosines (A1518 and A1519) in the loop of a conserved hairpin near the 3'-end of 16S rRNA in the 30S particle. May play a critical role in biogenesis of 30S subunits. The polypeptide is Ribosomal RNA small subunit methyltransferase A (Methylococcus capsulatus (strain ATCC 33009 / NCIMB 11132 / Bath)).